A 404-amino-acid polypeptide reads, in one-letter code: MSTIKVIEVYTQNGLRKVRPYYNRRSAFVKGRWLGKLLIDVLVSEFKLRPRAYYLDQIRKGTYRLIRDGVPLVPDHLMTTIIKNHDVLETTTHKHEPPVKQWCSQEVEAEDLPGRIAGFNIVFEDESILVIDKPSGIPVHPTGQFYQNTITELLKLHGVDALPCYRLDKITSGLLILAKNSQSAGEIQKSIRSRDMIKIYLARVKGRFPHSELILDNENAAETTFEDTSKVTVEMTPIYSIDPKRQFPVGLSTSKDAITKFYPIRYFSHADETVVACKPITGRTHQIRIHLARLGHPIVNDSVYCSHITKYPERLKFITQFPRWENQQDLDAEELKVRFQKFVDETKNNCRTMETFCPECHTVDLKDPVLSDLELWLHAWKYEEINGKFKFKTDLPKWAQLDNS.

Asp168 is a catalytic residue.

This sequence belongs to the pseudouridine synthase RluA family.

It localises to the cytoplasm. The protein resides in the mitochondrion. The catalysed reaction is uridine(31) in tRNA = pseudouridine(31) in tRNA. Functionally, catalyzes the formation of pseudouridine at position 31 in the psi GC loop of tRNAS. The sequence is that of tRNA pseudouridine(31) synthase (PUS6) from Saccharomyces cerevisiae (strain ATCC 204508 / S288c) (Baker's yeast).